The sequence spans 43 residues: Defensin (43 aa).

Disulfide bonds link Cys3/Cys34, Cys20/Cys39, and Cys24/Cys41.

The protein belongs to the invertebrate defensin family. Type 1 subfamily.

The protein localises to the secreted. Antibacterial peptide. Affects Gram-positive bacteria M.luteus, B.megaterium, A.viridans, S.aureus and S.saprophyticus. Moderate activity against P.acidilactici and B.subtilis QB935. Also affects Gram-negative bacterium, D22 form of E.coli. The polypeptide is Defensin (Pyrrhocoris apterus (Sap sucking bug)).